The following is an 88-amino-acid chain: Small ribosomal subunit protein uS17 (88 aa).

This sequence belongs to the universal ribosomal protein uS17 family. In terms of assembly, part of the 30S ribosomal subunit.

In terms of biological role, one of the primary rRNA binding proteins, it binds specifically to the 5'-end of 16S ribosomal RNA. In Leuconostoc mesenteroides subsp. mesenteroides (strain ATCC 8293 / DSM 20343 / BCRC 11652 / CCM 1803 / JCM 6124 / NCDO 523 / NBRC 100496 / NCIMB 8023 / NCTC 12954 / NRRL B-1118 / 37Y), this protein is Small ribosomal subunit protein uS17.